The sequence spans 469 residues: Endoplasmic reticulum oxidoreductin-1 (469 aa).

The N-terminal stretch at 1–36 is a signal peptide; that stretch reads MGKGAIKEEESEKKRKTWRWPLATLVVVFLAVAVSS. 6 cysteine pairs are disulfide-bonded: cysteine 52-cysteine 71, cysteine 54-cysteine 69, cysteine 108-cysteine 372, cysteine 117-cysteine 122, cysteine 222-cysteine 231, and cysteine 375-cysteine 378. FAD contacts are provided by arginine 201, threonine 203, and tryptophan 214. The FAD site is built by serine 242, histidine 245, arginine 275, and arginine 282. The N-linked (GlcNAc...) asparagine glycan is linked to asparagine 365.

Belongs to the EROs family. In terms of assembly, may function both as a monomer and a homodimer. FAD is required as a cofactor. In terms of processing, N-glycosylated.

Its subcellular location is the endoplasmic reticulum membrane. Essential oxidoreductase that oxidizes proteins in the endoplasmic reticulum to produce disulfide bonds. Acts by oxidizing directly PDI isomerase through a direct disulfide exchange. Does not act as a direct oxidant of folding substrate, but relies on PDI to transfer oxidizing equivalent. Does not oxidize all PDI related proteins, suggesting that it can discriminate between PDI and related proteins. Its reoxidation probably involves electron transfer to molecular oxygen via FAD. Acts independently of glutathione. May be responsible for a significant proportion of reactive oxygen species (ROS) in the cell, thereby being a source of oxidative stress. In Arabidopsis thaliana (Mouse-ear cress), this protein is Endoplasmic reticulum oxidoreductin-1 (AERO1).